The following is a 1021-amino-acid chain: Inversin (1021 aa).

ANK repeat units follow at residues 7–36, 40–69, 73–102, 106–137, 141–170, 174–206, 213–243, 247–276, 281–310, 314–343, 349–378, 382–411, 415–444, 448–477, 481–510, and 516–546; these read QNPSQVHAAAVNGDKNTLHKLITESALRDS, FGRTPLMYCVLADRLDCAEVLLKAGAGINK, SQRTALHLAAQKGNVRFMKLLLSRHADWRL, EEMTPLHLASRHSSSKPLSLLLKHMAPGEVDT, NKQTALHWSAFYNHPEHVKLLIKHDSNIGI, EGKIPLHWAAHNKHPNATRTVRCILEAAPTESL, EGRTPLHFAVADGNEAVVEVLTSYEGCSVTA, LFRTPLHWAALLGHAKIVHLLLERNKSGMI, QGATPLHYGAQSNFADTVAVFLKHHSVRDE, EGRTAFMWAAGKGSNDVIKIMLDLKKDIDI, YGGTALHAAALSGHVSTVRLLLEQGGMVDP, MKHTPLFRACEMGHRDVILTLIKGGARVDL, DGHSALHWAALGGNAEVCEVLMENGISPNL, AGRTPLQCAAYAGYINCMALLIQHDADPNI, EGRTALHWSCNNGYLDAVKLLLGCGAFPNH, and ERYTPLDYALLGEHQELTQFLLEHGALSIAA. Positions 483–491 match the D-box 1 motif; that stretch reads RTALHWSCN. In terms of domain architecture, IQ 1 spans 548-577; the sequence is QDIAASSIQALYKGYKVRRAFRERKKLLMR. 2 stretches are compositionally biased toward basic and acidic residues: residues 579 to 598 and 653 to 669; these read EQLRKDAAKKREEERRREAE and SRREKPSRAERRTREPE. 3 disordered regions span residues 579 to 602, 632 to 691, and 704 to 868; these read EQLRKDAAKKREEERRREAEQQLS, KDSV…KKCP, and GPDT…GTCS. The segment covering 722-731 has biased composition (low complexity); the sequence is PAGSSRPGSA. Composition is skewed to polar residues over residues 759–781 and 791–802; these read GAHSKNASQDTPQHNETQTTSKG and TGSQPSNNTSVT. The span at 803 to 866 shows a compositional bias: basic and acidic residues; sequence RQKEKRQEKE…KEKEKKKDGT (64 aa). The D-box 2 motif lies at 862-870; that stretch reads KKDGTCSKN. Residues 869-898 enclose the IQ 2 domain; it reads KNQAAVVIQRAWRRSCVRGRIRKVLCRSLK.

Binds calmodulin via its IQ domains.

The protein resides in the cytoplasm. It localises to the cytoskeleton. Its function is as follows. Required for normal renal development and establishment of left-right axis. Probably acts as a molecular switch between different Wnt signaling pathways. Inhibits the canonical Wnt pathway by targeting cytoplasmic disheveled for degradation by the ubiquitin-proteasome. This suggests that it is required in renal development to oppose the repression of terminal differentiation of tubular epithelial cells by Wnt signaling. In Danio rerio (Zebrafish), this protein is Inversin (invs).